A 329-amino-acid polypeptide reads, in one-letter code: Diaminopimelate epimerase (329 aa).

Residues Asn-14 and Asn-73 each coordinate substrate. The active-site Proton donor is the Cys-82. Residues Gly-83–Asn-84, Asn-170, Asn-206, and Glu-224–Arg-225 contribute to the substrate site. Cys-233 (proton acceptor) is an active-site residue. Residue Gly-234–Thr-235 coordinates substrate.

Belongs to the diaminopimelate epimerase family. Homodimer.

It is found in the cytoplasm. It catalyses the reaction (2S,6S)-2,6-diaminopimelate = meso-2,6-diaminopimelate. The protein operates within amino-acid biosynthesis; L-lysine biosynthesis via DAP pathway; DL-2,6-diaminopimelate from LL-2,6-diaminopimelate: step 1/1. In terms of biological role, catalyzes the stereoinversion of LL-2,6-diaminopimelate (L,L-DAP) to meso-diaminopimelate (meso-DAP), a precursor of L-lysine and an essential component of the bacterial peptidoglycan. The sequence is that of Diaminopimelate epimerase from Listeria monocytogenes serovar 1/2a (strain ATCC BAA-679 / EGD-e).